The chain runs to 216 residues: Probable calcium-binding protein CML35 (216 aa).

Residues T18 to S58 are disordered. Residues S23–S44 are compositionally biased toward low complexity. 4 EF-hand domains span residues D66 to E101, P103 to E138, V141 to E176, and C178 to D213. 4 residues coordinate Ca(2+): D79, D81, D83, and D90. The Ca(2+) site is built by D154, D156, N158, K160, E165, D191, N193, D195, and D202.

Functionally, potential calcium sensor. This Arabidopsis thaliana (Mouse-ear cress) protein is Probable calcium-binding protein CML35 (CML35).